Consider the following 34-residue polypeptide: Protamine (34 aa).

Residues 1 to 34 are disordered; that stretch reads PRRRRQASRPVRRRRRTRRSTAERRRRRVVRRRR.

As to expression, testis.

It is found in the nucleus. It localises to the chromosome. In terms of biological role, protamines substitute for histones in the chromatin of sperm during the haploid phase of spermatogenesis. They compact sperm DNA into a highly condensed, stable and inactive complex. The protein is Protamine of Dicentrarchus labrax (European seabass).